Here is a 416-residue protein sequence, read N- to C-terminus: Hepatic and glial cell adhesion molecule (416 aa).

The N-terminal stretch at 1-33 (MKRERGALSRASRALRLAPFVYLLLIQTDPLEG) is a signal peptide. The Ig-like V-type domain maps to 34–142 (VNITSPVRLI…GEKTINLTVD (109 aa)). At 34 to 240 (VNITSPVRLI…VKITVYRRSS (207 aa)) the chain is on the extracellular side. N-linked (GlcNAc...) asparagine glycans are attached at residues asparagine 35, asparagine 138, asparagine 167, and asparagine 189. The 87-residue stretch at 148–234 (PQVLVASTTV…QGRSLPVKIT (87 aa)) folds into the Ig-like C2-type domain. Cysteine 168 and cysteine 217 form a disulfide bridge. The helical transmembrane segment at 241–261 (LYIILSTGGIFLLVTLVTVCA) threads the bilayer. Residues 262-416 (CWKPSKRKQK…DEAGPVEISA (155 aa)) are Cytoplasmic-facing. Residues 273 to 416 (LEKQNSLEYM…DEAGPVEISA (144 aa)) form a disordered region. At serine 278 the chain carries Phosphoserine. Basic and acidic residues predominate over residues 285–306 (NDDRLKPEADTLPRSGEQERKN). Serine 350 and serine 377 each carry phosphoserine. A compositionally biased stretch (low complexity) spans 383-398 (SSPGRSRSASRTLRTA).

In terms of assembly, homodimer. Dimer formation occurs predominantly through cis interactions on the cell surface. Part of a complex containing MLC1, TRPV4, AQP4 and ATP1B1. Interacts with CLCN2. N-glycosylated.

Its subcellular location is the cytoplasm. The protein resides in the cell membrane. Functionally, involved in regulating cell motility and cell-matrix interactions. May inhibit cell growth through suppression of cell proliferation. In glia, associates and targets CLCN2 at astrocytic processes and myelinated fiber tracts where it may regulate transcellular chloride flux involved in neuron excitability. This chain is Hepatic and glial cell adhesion molecule, found in Homo sapiens (Human).